We begin with the raw amino-acid sequence, 117 residues long: Ribonuclease P protein component (117 aa).

The protein belongs to the RnpA family. As to quaternary structure, consists of a catalytic RNA component (M1 or rnpB) and a protein subunit.

It catalyses the reaction Endonucleolytic cleavage of RNA, removing 5'-extranucleotides from tRNA precursor.. Its function is as follows. RNaseP catalyzes the removal of the 5'-leader sequence from pre-tRNA to produce the mature 5'-terminus. It can also cleave other RNA substrates such as 4.5S RNA. The protein component plays an auxiliary but essential role in vivo by binding to the 5'-leader sequence and broadening the substrate specificity of the ribozyme. This chain is Ribonuclease P protein component, found in Limosilactobacillus reuteri subsp. reuteri (strain JCM 1112) (Lactobacillus reuteri).